We begin with the raw amino-acid sequence, 211 residues long: Endoplasmic reticulum vesicle protein 25 (211 aa).

Positions 1-19 (MKSIVSVLTLLLLINAVAA) are cleaved as a signal peptide. Residues 20–180 (LRFVLPAKDK…TNESTNRRVK (161 aa)) lie on the Lumenal side of the membrane. Residues 33–121 (PFCVRDFVKN…TKEIDLSVAI (89 aa)) enclose the GOLD domain. Residues 181 to 201 (FFSVGITLALIALGVWQIIYL) form a helical membrane-spanning segment. The Cytoplasmic portion of the chain corresponds to 202–211 (RSYFRSKHII).

This sequence belongs to the EMP24/GP25L family.

It is found in the endoplasmic reticulum membrane. The protein resides in the golgi apparatus membrane. Functionally, constituent of COPII-coated endoplasmic reticulum-derived transport vesicles. Required for efficient transport of a subset of secretory proteins to the Golgi. Facilitates retrograde transport from the Golgi to the endoplasmic reticulum. The chain is Endoplasmic reticulum vesicle protein 25 (ERV25) from Yarrowia lipolytica (strain CLIB 122 / E 150) (Yeast).